We begin with the raw amino-acid sequence, 259 residues long: 3-deoxy-manno-octulosonate cytidylyltransferase (259 aa).

Belongs to the KdsB family.

Its subcellular location is the cytoplasm. The enzyme catalyses 3-deoxy-alpha-D-manno-oct-2-ulosonate + CTP = CMP-3-deoxy-beta-D-manno-octulosonate + diphosphate. It participates in nucleotide-sugar biosynthesis; CMP-3-deoxy-D-manno-octulosonate biosynthesis; CMP-3-deoxy-D-manno-octulosonate from 3-deoxy-D-manno-octulosonate and CTP: step 1/1. It functions in the pathway bacterial outer membrane biogenesis; lipopolysaccharide biosynthesis. Functionally, activates KDO (a required 8-carbon sugar) for incorporation into bacterial lipopolysaccharide in Gram-negative bacteria. This chain is 3-deoxy-manno-octulosonate cytidylyltransferase, found in Nitrosococcus oceani (strain ATCC 19707 / BCRC 17464 / JCM 30415 / NCIMB 11848 / C-107).